A 547-amino-acid chain; its full sequence is Membrane protein insertase YidC (547 aa).

6 helical membrane passes run 6 to 26 (LILVLIFTFSSFMLWENWQKY), 328 to 348 (VVDYGWLTVVAAPIFWALEAI), 351 to 371 (LVGNWGWAIVVLTIMIKAVFF), 425 to 445 (LPILVQIPVFIALYWVLLGAV), 459 to 479 (LASADPYYILPVIMMVSMFVQ), and 499 to 519 (PLIFGFMFFWFPAGLVLYWVV).

The protein belongs to the OXA1/ALB3/YidC family. Type 1 subfamily. Interacts with the Sec translocase complex via SecD. Specifically interacts with transmembrane segments of nascent integral membrane proteins during membrane integration.

The protein resides in the cell inner membrane. Its function is as follows. Required for the insertion and/or proper folding and/or complex formation of integral membrane proteins into the membrane. Involved in integration of membrane proteins that insert both dependently and independently of the Sec translocase complex, as well as at least some lipoproteins. Aids folding of multispanning membrane proteins. The chain is Membrane protein insertase YidC from Dechloromonas aromatica (strain RCB).